A 138-amino-acid chain; its full sequence is Salivary protein 15 Iper-3 (138 aa).

Positions 1–21 (MESFVAMKVVCITVLFVIVAV) are cleaved as a signal peptide. 5 N-linked (GlcNAc...) asparagine glycosylation sites follow: asparagine 30, asparagine 42, asparagine 68, asparagine 107, and asparagine 127. Residues 119-138 (GPNGQKCANKSQCVGHIPGC) are CD4-binding.

This sequence belongs to the salp15 family. As to quaternary structure, interacts with host CD4. Interacts with host DC-SIGN (CD209). Interacts with Borrelia outer surface protein C (OspC). In terms of tissue distribution, expressed in salivary glands.

It localises to the secreted. Its function is as follows. Salivary tick protein that downregulates host immune system by binding to both dendritic cells, and CD4(+) T cells. Specifically binds to the CD4 coreceptor on T cells. This interaction prevents the activation of the Src kinase, Lck, and its downstream substrate Zap-70, and results in deficient activation of PLCgamma1, the repression of calcium fluxes triggered by T-cell antigen receptor (TCR) ligation, and a subsequent reduction in interleukin-2 production. This salivary protein also binds to DC-SIGN (CD209) on dendritic cells (DC) and activates the Raf-1 kinase/MEK signaling pathway that results in down-regulating expression of pro-inflammatory cytokines. Furthermore, it inhibits T cell proliferation induced by DCs. It also inhibits in vitro keratinocyte inflammation induced by Borrelia burgdorferi or by the major outer surface protein (OspC) of Borrelia. In addition, it downregulates chemokines and monocyte chemoattractant protein 1, as well as several antimicrobial peptides such as defensins, cathelicidin, psoriasin, and RNase 7. Apart from its immunomodulatory activities, it is also associated with protection of Borrelia spirochetes from antibody-mediated killing through its binding to OspC. In vivo, tests on different immune disease animal models show promising therapeutic results, e.g., in inhibiting HIV infection, experimental autoimmune encephalomyelitis, transplantation rejection, and asthma. The protein is Salivary protein 15 Iper-3 of Ixodes persulcatus (Taiga tick).